The primary structure comprises 96 residues: Co-chaperonin GroES 2 (96 aa).

Belongs to the GroES chaperonin family. As to quaternary structure, heptamer of 7 subunits arranged in a ring. Interacts with the chaperonin GroEL.

The protein localises to the cytoplasm. Functionally, together with the chaperonin GroEL, plays an essential role in assisting protein folding. The GroEL-GroES system forms a nano-cage that allows encapsulation of the non-native substrate proteins and provides a physical environment optimized to promote and accelerate protein folding. GroES binds to the apical surface of the GroEL ring, thereby capping the opening of the GroEL channel. The protein is Co-chaperonin GroES 2 of Vibrio vulnificus (strain CMCP6).